Consider the following 128-residue polypeptide: Small ribosomal subunit protein bS6 (128 aa).

Belongs to the bacterial ribosomal protein bS6 family.

Binds together with bS18 to 16S ribosomal RNA. The protein is Small ribosomal subunit protein bS6 of Geotalea uraniireducens (strain Rf4) (Geobacter uraniireducens).